Reading from the N-terminus, the 148-residue chain is Large ribosomal subunit protein bL9 (148 aa).

It belongs to the bacterial ribosomal protein bL9 family.

Binds to the 23S rRNA. The chain is Large ribosomal subunit protein bL9 from Listeria monocytogenes serotype 4a (strain HCC23).